A 309-amino-acid polypeptide reads, in one-letter code: Ribonuclease Z (309 aa).

Zn(2+)-binding residues include His-63, His-65, Asp-67, His-68, His-145, Asp-216, and His-274. Catalysis depends on Asp-67, which acts as the Proton acceptor.

This sequence belongs to the RNase Z family. As to quaternary structure, homodimer. The cofactor is Zn(2+).

It carries out the reaction Endonucleolytic cleavage of RNA, removing extra 3' nucleotides from tRNA precursor, generating 3' termini of tRNAs. A 3'-hydroxy group is left at the tRNA terminus and a 5'-phosphoryl group is left at the trailer molecule.. Functionally, zinc phosphodiesterase, which displays some tRNA 3'-processing endonuclease activity. Probably involved in tRNA maturation, by removing a 3'-trailer from precursor tRNA. The chain is Ribonuclease Z from Streptococcus equi subsp. equi (strain 4047).